The following is a 334-amino-acid chain: Malate dehydrogenase, cytoplasmic (334 aa).

N-acetylserine is present on Ser2. Residues 11-17 and Asp42 each bind NAD(+); that span reads GAAGQIA. Arg92 and Arg98 together coordinate substrate. Residue Asn105 participates in NAD(+) binding. N6-succinyllysine is present on Lys110. Gln112 is an NAD(+) binding site. N6-acetyllysine occurs at positions 118 and 121. 129–131 serves as a coordination point for NAD(+); the sequence is VGN. Substrate-binding residues include Asn131 and Arg162. His187 acts as the Proton acceptor in catalysis. Lys214 carries the N6-succinyllysine modification. Ser217 carries the post-translational modification Phosphoserine. Arg230 is subject to Omega-N-methylarginine. Ser241 is modified (phosphoserine). At Lys298 the chain carries N6-acetyllysine; alternate. At Lys298 the chain carries N6-succinyllysine; alternate. Ser309 is subject to Phosphoserine. An N6-succinyllysine modification is found at Lys318. Phosphoserine occurs at positions 332 and 333.

The protein belongs to the LDH/MDH superfamily. MDH type 2 family. As to quaternary structure, homodimer. ISGylated. Post-translationally, acetylation at Lys-118 dramatically enhances enzymatic activity and promotes adipogenic differentiation.

The protein localises to the cytoplasm. Its subcellular location is the cytosol. The catalysed reaction is (S)-malate + NAD(+) = oxaloacetate + NADH + H(+). It catalyses the reaction (2R)-2-hydroxy-3-(4-hydroxyphenyl)propanoate + NAD(+) = 3-(4-hydroxyphenyl)pyruvate + NADH + H(+). It carries out the reaction (S)-2-hydroxyglutarate + NAD(+) = 2-oxoglutarate + NADH + H(+). Functionally, catalyzes the reduction of aromatic alpha-keto acids in the presence of NADH. Plays essential roles in the malate-aspartate shuttle and the tricarboxylic acid cycle, important in mitochondrial NADH supply for oxidative phosphorylation. Catalyzes the reduction of 2-oxoglutarate to 2-hydroxyglutarate, leading to elevated reactive oxygen species (ROS). The chain is Malate dehydrogenase, cytoplasmic (MDH1) from Felis catus (Cat).